Consider the following 755-residue polypeptide: MSQTLKKRGGNSSGRKSPTTSNIEFDDKKTEFDLNAIVPPKEPEYKYLAALTLVTLLAIYTRFTKLGTPNKVVFDEVHFGKFASYYLERTYFFDLHPPFAKLLIAFVGWLIGYDGKFKFEAIGDSYIENNVPYIAYRSLSAIQGAAIVPIMFLTMKTLGFSVAACLFSSIIVCFDNAQVTDSRLILLDATLILSVALTIFSYSKFSTFRKQSFSSKWWTWLLATGVSLSCVISTKYVGVFTYLTIGIAVIHELWILLDYRKGLTLQEFAKHFFARLWALIIVPFCIYLYWFYLHFAILTRSGPGDAFMSSEFQETLLESPLAAHSKPVQYFDQITIKHKDTGAFLHSHQHEYPLRYEDGRISSNGQQVTCVVQENAANDPNNQWEIVPTSEGANKGTKVYTNDIVRFRHVGTGGYLLTHDVASPLKPTNEEFTVVYDDVAQQRYNETLFRLRLHVPGSNPKKEKNKKEIKTLATDLRILHVDTVVAMWTHNDELLPEWAFNQQEVSGNKKIPDKDNIWNFDLITNLQSTDPRNQYVPKKVKTLPFLRKWWELQMLMFHHNNQLSSEHPFATQPGEWPLALSGVSFYNDNTEKKQIFFIGNIIGFWLEVCFLSIYIGILLADQITRRRNVHVLSDRARSRLYNTLGFLFVGWAAHYLPFFLMNRQKFLHHYLPAHLVAALFSGGLVEFICSNNSARPNGKPVGVNKYKIIAVVAACSTAIIWFFFYFRPLTYGDVYLTPEEVKARQWLDIKLHYGK.

The interval 1–23 is disordered; the sequence is MSQTLKKRGGNSSGRKSPTTSNI. Asn-11 carries N-linked (GlcNAc...) asparagine glycosylation. A compositionally biased stretch (polar residues) spans 13-23; the sequence is SGRKSPTTSNI. The next 6 membrane-spanning stretches (helical) occupy residues 92 to 112, 147 to 167, 185 to 205, 212 to 232, 237 to 257, and 278 to 298; these read FFDLHPPFAKLLIAFVGWLIG, IVPIMFLTMKTLGFSVAACLF, ILLDATLILSVALTIFSYSKF, SFSSKWWTWLLATGVSLSCVI, VGVFTYLTIGIAVIHELWILL, and ALIIVPFCIYLYWFYLHFAIL. MIR domains are found at residues 325–389, 396–454, and 466–523; these read SKPV…IVPT, GTKV…LRLH, and KKEI…FDLI. An N-linked (GlcNAc...) asparagine glycan is attached at Asn-445. Transmembrane regions (helical) follow at residues 595–615, 640–660, and 670–690; these read IFFIGNIIGFWLEVCFLSIYI, LYNTLGFLFVGWAAHYLPFFL, and YLPAHLVAALFSGGLVEFICS. A glycan (N-linked (GlcNAc...) asparagine) is linked at Asn-691. A helical transmembrane segment spans residues 706–726; it reads YKIIAVVAACSTAIIWFFFYF.

The protein belongs to the glycosyltransferase 39 family. Forms a functional homodimer.

The protein resides in the endoplasmic reticulum membrane. The enzyme catalyses a di-trans,poly-cis-dolichyl beta-D-mannosyl phosphate + L-seryl-[protein] = 3-O-(alpha-D-mannosyl)-L-seryl-[protein] + a di-trans,poly-cis-dolichyl phosphate + H(+). It carries out the reaction a di-trans,poly-cis-dolichyl beta-D-mannosyl phosphate + L-threonyl-[protein] = 3-O-(alpha-D-mannosyl)-L-threonyl-[protein] + a di-trans,poly-cis-dolichyl phosphate + H(+). The protein operates within protein modification; protein glycosylation. Its function is as follows. Protein mannosyltransferase (PMT) involved in hyphal growth and drug sensitivity. Transfers mannose from Dol-P-mannose to Ser or Thr residues on proteins. PMT1, PMT2 and PMT4 account for most of the protein-O-glycosylation activity, while PMT5 and PMT6 may specifically modulate a much narrower spectrum of target proteins. Accounts for the O-glycosylation of AXL2, responsible for bud site selection, as well as of the SEC20 t-SNARE component. O-glycosylation of SEC20 is essential for its stability. Required for biofilm formation. This chain is Dolichyl-phosphate-mannose--protein mannosyltransferase 4, found in Candida albicans (strain SC5314 / ATCC MYA-2876) (Yeast).